The primary structure comprises 313 residues: 3'-5' exoribonuclease YhaM (313 aa).

In terms of domain architecture, HD spans 163–279; it reads HVVSMLRLAK…LHQIDLMDAS (117 aa).

This sequence belongs to the YhaM family.

Functionally, shows a 3'-5' exoribonuclease activity. This chain is 3'-5' exoribonuclease YhaM, found in Listeria welshimeri serovar 6b (strain ATCC 35897 / DSM 20650 / CCUG 15529 / CIP 8149 / NCTC 11857 / SLCC 5334 / V8).